The sequence spans 288 residues: Rhythmically expressed gene 5 protein (288 aa).

As to expression, expressed in head, but not in the body. Expression levels oscillate with the circadian rhythm.

Functionally, involved in the generation of biological rhythms (Potential). In the head, oscillates in abundance with a daily peak during early night, even under constant darkness. Oscillation is dependent on period (per) function. This is Rhythmically expressed gene 5 protein (Reg-5) from Drosophila melanogaster (Fruit fly).